Reading from the N-terminus, the 951-residue chain is Zinc fingers and homeoboxes protein 3 (951 aa).

Positions 1 to 66 are disordered; sequence MASKRKSTTP…SSTDGSALAN (66 aa). Residues 42 to 58 show a composition bias toward low complexity; sequence PSEAPEASSEAAPNPSS. 2 C2H2-type zinc fingers span residues 77–100 and 109–132; these read YSCKECDFRSQDVTHFVGHMTSEH and FVCTGCSFLAKTPEGLSLHNAKCH. Residues 198 to 249 are disordered; the sequence is KENAPTQPGGEALPKPLAGETEGKEGDHTFINGATPVSQASANSTKPPHTAN. Polar residues predominate over residues 232–244; the sequence is TPVSQASANSTKP. The required for homodimerization and interaction with NFYA stretch occupies residues 237-481; sequence ASANSTKPPH…LLTACPSITS (245 aa). A required for repressor activity region spans residues 297 to 495; sequence LSSIPTYNAA…DANIYKNKKS (199 aa). 2 consecutive DNA-binding regions (homeobox) follow at residues 298–357 and 487–546; these read SSIP…GISW and ANIY…RNLK. Positions 490–548 are required for nuclear localization; that stretch reads YKNKKSHEQLSALKGSFCRNQFPGQSEVEHLTKVTGLSTREVRKWFSDRRYHCRNLKGT. At Ser-597 the chain carries Phosphoserine. The homeobox 3 DNA-binding region spans 605–664; sequence TPTKYKERAPEQLRVLESSFAQNPLPPEEELDRLRSETKMTRREIDGWFSERRKRVNAEE. 2 disordered regions span residues 621–642 and 661–702; these read ESSFAQNPLPPEEELDRLRSET and NAEE…NGSS. A compositionally biased stretch (basic and acidic residues) spans 661–674; sequence NAEETKKADGHAPQ. Residues 675–690 are compositionally biased toward acidic residues; it reads EEAEGAEEEGRDEELA. Residues Ser-701 and Ser-716 each carry the phosphoserine modification. DNA-binding regions (homeobox) lie at residues 759–818 and 830–889; these read PSRV…KNGQ and FPPG…TRAV. A disordered region spans residues 885–951; that stretch reads ETRAVADTSS…PQSGRQLETD (67 aa). Residues Ser-922 and Ser-941 each carry the phosphoserine modification. Residues 937–951 show a composition bias toward polar residues; that stretch reads FDTSSPQSGRQLETD.

It belongs to the ZHX family. As to quaternary structure, homodimer (via homeobox domain 1). Heterodimer with ZHX1 (via homeobox domain 1). Heterodimer with ZHX2 (via homeobox domain 1). Heterodimerization with ZHX1 is a prerequisite for repressor activity. Interacts with NFYA. In terms of tissue distribution, widely expressed.

The protein localises to the cytoplasm. Its subcellular location is the nucleus. Its function is as follows. Acts as a transcriptional repressor. Involved in the early stages of mesenchymal stem cell (MSC) osteogenic differentiation. Is a regulator of podocyte gene expression during primary glomerula disease. Binds to promoter DNA. This chain is Zinc fingers and homeoboxes protein 3 (Zhx3), found in Rattus norvegicus (Rat).